Reading from the N-terminus, the 320-residue chain is Taurine-binding periplasmic protein (320 aa).

Residues M1–A22 form the signal peptide.

It belongs to the bacterial solute-binding protein SsuA/TauA family.

The protein resides in the periplasm. Part of a binding-protein-dependent transport system for taurine. This chain is Taurine-binding periplasmic protein (tauA), found in Escherichia coli (strain K12).